A 372-amino-acid chain; its full sequence is Transcription factor YY2 (372 aa).

Residues 32-102 (MEDIPTESVQ…SDNQLGNDLE (71 aa)) are mediates transcriptional activation. Positions 126 to 136 (SAASTSTSTQS) are enriched in low complexity. 2 disordered regions span residues 126–172 (SAAS…WEQK) and 186–210 (TMWSPNDNNDQGAVGEGQAENPPDY). Over residues 137–146 (RSKKPSKKPS) the composition is skewed to basic residues. 2 stretches are compositionally biased toward polar residues: residues 154-165 (EANPAGSSSSLG) and 186-196 (TMWSPNDNNDQ). Positions 237–372 (EFTKVKPKRS…LTHVKTKNNP (136 aa)) are mediates transcriptional repression. 4 C2H2-type zinc fingers span residues 254-278 (VPCSYSGCEKMFRDYAAMRKHLHIH), 283-305 (HVCAECGKAFLESSKLRRHQLVH), 311-335 (FQCTFEGCGKRFSLDFNLRTHLRIH), and 341-365 (FVCPFDVCNRKFAQSTNLKTHILTH).

This sequence belongs to the YY transcription factor family. In terms of tissue distribution, expressed in kidney, liver, spleen and testis but not in colon.

It is found in the nucleus. Functionally, functions as a multifunctional transcription factor that may exhibit positive and negative control on a large number of genes. May antagonize YY1 and function in development and differentiation. In Homo sapiens (Human), this protein is Transcription factor YY2 (YY2).